The primary structure comprises 801 residues: Palmitoyl thioesterase CPT1C (801 aa).

The Cytoplasmic segment spans residues 1–49 (MAEAHQASSLLSSLSSDGAEVELSSSVWQEIYLSALRSWKRNLWRVWND). Residues 50 to 70 (FLAGVVPATPLSWLFLFSTIQ) traverse the membrane as a helical segment. The Mitochondrial intermembrane portion of the chain corresponds to 71 to 103 (LACLLQLDPSLGLMEKIKELLPDWGGQHHQLQG). The chain crosses the membrane as a helical span at residues 104–124 (LLAAAVFASCLWGTLIFTLHV). Residues 125–801 (ALRLLLSHHG…PNIPKSSTNL (677 aa)) lie on the Cytoplasmic side of the membrane. The active-site Proton acceptor is His-469. 551 to 563 (GKSFIKGCHVSSD) contributes to the CoA binding site. 3 residues coordinate (R)-carnitine: Tyr-585, Ser-587, and Thr-598. Positions 760-801 (LFQAGQQFKRQFTGLGESSGWKYSNLSCKTVDPNIPKSSTNL) are required for interaction with GRIA1.

Belongs to the carnitine/choline acetyltransferase family. As to quaternary structure, peripherally associated with AMPAR complex. AMPAR complex consists of an inner core made of 4 pore-forming GluA/GRIA proteins (GRIA1, GRIA2, GRIA3 and GRIA4) and 4 major auxiliary subunits arranged in a twofold symmetry. One of the two pairs of distinct binding sites is occupied either by CNIH2, CNIH3 or CACNG2, CACNG3. The other harbors CACNG2, CACNG3, CACNG4, CACNG8 or GSG1L. This inner core of AMPAR complex is complemented by outer core constituents binding directly to the GluA/GRIA proteins at sites distinct from the interaction sites of the inner core constituents. Outer core constituents include at least PRRT1, PRRT2, CKAMP44/SHISA9, FRRS1L and NRN1. The proteins of the inner and outer core serve as a platform for other, more peripherally associated AMPAR constituents, including CPT1C. Alone or in combination, these auxiliary subunits control the gating and pharmacology of the AMPAR complex and profoundly impact their biogenesis and protein processing. Interacts with SACM1L; the interaction regulates SACM1L phosphatidylinositol-3-phosphatase activity and translocation to endoplasmic reticulum/trans Golgi network in a malonyl-CoA dependent manner. Interacts with ATL1. Expressed in brain (at protein level).

The protein resides in the synapse. It localises to the cell projection. The protein localises to the dendrite. It is found in the axon. Its subcellular location is the endoplasmic reticulum membrane. It carries out the reaction S-hexadecanoyl-L-cysteinyl-[protein] + H2O = L-cysteinyl-[protein] + hexadecanoate + H(+). Its function is as follows. Palmitoyl thioesterase specifically expressed in the endoplasmic reticulum of neurons. Modulates the trafficking of the glutamate receptor, AMPAR, to plasma membrane through depalmitoylation of GRIA1. Also regulates AMPR trafficking through the regulation of SACM1L phosphatidylinositol-3-phosphatase activity by interaction in a malonyl-CoA dependent manner. Binds malonyl-CoA and couples malonyl-CoA to ceramide levels, necessary for proper spine maturation and contributing to systemic energy homeostasis and appetite control. Binds to palmitoyl-CoA, but does not have carnitine palmitoyltransferase 1 catalytic activity or at very low levels. This chain is Palmitoyl thioesterase CPT1C (Cpt1c), found in Rattus norvegicus (Rat).